Consider the following 440-residue polypeptide: Chitinase-like protein Idgf2 (440 aa).

Positions 1-20 (MKAWIWFTFVACLFAASTEA) are cleaved as a signal peptide. The GH18 domain maps to 22 to 440 (SNLVCYYDSS…PILRAIKYRL (419 aa)). Cys-26 and Cys-53 are oxidised to a cystine. N-linked (GlcNAc...) asparagine glycosylation occurs at Asn-220. Cys-342 and Cys-425 form a disulfide bridge.

Belongs to the glycosyl hydrolase 18 family. IDGF subfamily. Glycosylated. As to expression, primarily expressed in yolk cells and fat body. In larvae, it is expressed in the imaginal ring and weakly expressed in imaginal disks. More strongly expressed than Idgf1 and Idgf3.

Its subcellular location is the secreted. Functionally, cooperates with insulin-like peptides to stimulate the proliferation, polarization and motility of imaginal disk cells. May act by stabilizing the binding of insulin-like peptides to its receptor through a simultaneous interaction with both molecules to form a multiprotein signaling complex. This chain is Chitinase-like protein Idgf2 (Idgf2), found in Drosophila melanogaster (Fruit fly).